Consider the following 105-residue polypeptide: Nucleoid-associated protein MW0434 (105 aa).

The segment at 1–33 (MRGGGNMQQMMKQMQKMQKKMAQEQEKLKEERI) is disordered. Residues 7–16 (MQQMMKQMQK) show a composition bias toward low complexity. The span at 21 to 33 (MAQEQEKLKEERI) shows a compositional bias: basic and acidic residues.

It belongs to the YbaB/EbfC family. As to quaternary structure, homodimer.

Its subcellular location is the cytoplasm. It is found in the nucleoid. In terms of biological role, binds to DNA and alters its conformation. May be involved in regulation of gene expression, nucleoid organization and DNA protection. In Staphylococcus aureus (strain MW2), this protein is Nucleoid-associated protein MW0434.